Here is a 513-residue protein sequence, read N- to C-terminus: 2-isopropylmalate synthase (513 aa).

One can recognise a Pyruvate carboxyltransferase domain in the interval 5–268 (LIIFDTTLRD…DLRVDTSQIV (264 aa)). Residues aspartate 14, histidine 202, histidine 204, and asparagine 239 each coordinate Mn(2+). A regulatory domain region spans residues 394 to 513 (RLLALSQHSE…SKAERVAAQG (120 aa)).

It belongs to the alpha-IPM synthase/homocitrate synthase family. LeuA type 1 subfamily. Homodimer. Requires Mn(2+) as cofactor.

The protein resides in the cytoplasm. It catalyses the reaction 3-methyl-2-oxobutanoate + acetyl-CoA + H2O = (2S)-2-isopropylmalate + CoA + H(+). It participates in amino-acid biosynthesis; L-leucine biosynthesis; L-leucine from 3-methyl-2-oxobutanoate: step 1/4. In terms of biological role, catalyzes the condensation of the acetyl group of acetyl-CoA with 3-methyl-2-oxobutanoate (2-ketoisovalerate) to form 3-carboxy-3-hydroxy-4-methylpentanoate (2-isopropylmalate). This chain is 2-isopropylmalate synthase, found in Leptothrix cholodnii (strain ATCC 51168 / LMG 8142 / SP-6) (Leptothrix discophora (strain SP-6)).